A 250-amino-acid chain; its full sequence is MTTMADGLEAQDSSKSAFMEFGQQQSHSQQSSPVMAAGHYPSLHCLHSGSHHHPQHQHDTNYSGSNSYSRSLAAYPYMSHSQHSPYLQSCNSNTTTQSRAEEPDQQKTTVIENGEIRFNGKGKKIRKPRTIYSSLQLQALNHRFQQTQYLALPERAELAASLGVTQTQVKIWFQNKRSKYKKLIKQGNNPLEIDQLAGTVALSPRSPAIPPVWDVSASKGVSMAPNSYMPGYSHWYSSPHQDTMQRSQMM.

Disordered regions lie at residues 40–66 (YPSL…SGSN) and 84–106 (SPYL…PDQQ). A compositionally biased stretch (polar residues) spans 84 to 98 (SPYLQSCNSNTTTQS). Positions 125–184 (IRKPRTIYSSLQLQALNHRFQQTQYLALPERAELAASLGVTQTQVKIWFQNKRSKYKKLI) form a DNA-binding region, homeobox.

Belongs to the distal-less homeobox family.

It localises to the nucleus. This Xenopus laevis (African clawed frog) protein is Homeobox protein DLL-1 (dll1).